We begin with the raw amino-acid sequence, 310 residues long: MRRLLSSTFAALIVGLAVFSAPAASWAYPFWAQQNYDSPREATGKIVCANCHLAQKLTQAEVPQSVLPDSVFKAVVKIPYDTGVQELGADGSQVPLQVGAVVMLPDGFTLAPQDRWTDEIKEETEGVYFTEYSDDQPNVILVGPIPGDEHQEIVFPVLAPDPATDSSISFGKYSIHVGGNRGRGQVYPTGEKSNNTVYTAPASGSVSAIEPGDNGASVVTVKSADGAEITETVPVGPALLVSVGDVVEAGAPITDDPNVGGFGQLDTEVVLQNPVRIYGMLAFFAAVALAQIMLVLKKRQIEKVQAAEGV.

A signal peptide spans 1–23 (MRRLLSSTFAALIVGLAVFSAPA). Heme contacts are provided by Tyr-28, Cys-48, Cys-51, and His-52. Residues 277 to 297 (IYGMLAFFAAVALAQIMLVLK) form a helical membrane-spanning segment.

This sequence belongs to the cytochrome f family. As to quaternary structure, the 4 large subunits of the cytochrome b6-f complex are cytochrome b6, subunit IV (17 kDa polypeptide, PetD), cytochrome f and the Rieske protein, while the 4 small subunits are PetG, PetL, PetM and PetN. The complex functions as a dimer. The cofactor is heme.

Its subcellular location is the cellular thylakoid membrane. Component of the cytochrome b6-f complex, which mediates electron transfer between photosystem II (PSII) and photosystem I (PSI), cyclic electron flow around PSI, and state transitions. This Synechococcus sp. (strain CC9311) protein is Cytochrome f.